The sequence spans 282 residues: D-alanine aminotransferase (282 aa).

Tyr-32 is a binding site for substrate. Pyridoxal 5'-phosphate is bound at residue Arg-51. Arg-99 and His-101 together coordinate substrate. The active-site Proton acceptor is Lys-146. N6-(pyridoxal phosphate)lysine is present on Lys-146. A pyridoxal 5'-phosphate-binding site is contributed by Glu-178.

The protein belongs to the class-IV pyridoxal-phosphate-dependent aminotransferase family. Homodimer. Pyridoxal 5'-phosphate serves as cofactor.

It carries out the reaction D-alanine + 2-oxoglutarate = D-glutamate + pyruvate. In terms of biological role, acts on the D-isomers of alanine, leucine, aspartate, glutamate, aminobutyrate, norvaline and asparagine. The enzyme transfers an amino group from a substrate D-amino acid to the pyridoxal phosphate cofactor to form pyridoxamine and an alpha-keto acid in the first half-reaction. The second half-reaction is the reverse of the first, transferring the amino group from the pyridoxamine to a second alpha-keto acid to form the product D-amino acid via a ping-pong mechanism. This is an important process in the formation of D-alanine and D-glutamate, which are essential bacterial cell wall components. This chain is D-alanine aminotransferase (dat), found in Staphylococcus aureus (strain MW2).